A 90-amino-acid chain; its full sequence is Small ribosomal subunit protein uS15 (90 aa).

It belongs to the universal ribosomal protein uS15 family. Part of the 30S ribosomal subunit. Forms a bridge to the 50S subunit in the 70S ribosome, contacting the 23S rRNA.

One of the primary rRNA binding proteins, it binds directly to 16S rRNA where it helps nucleate assembly of the platform of the 30S subunit by binding and bridging several RNA helices of the 16S rRNA. Functionally, forms an intersubunit bridge (bridge B4) with the 23S rRNA of the 50S subunit in the ribosome. The sequence is that of Small ribosomal subunit protein uS15 from Aliarcobacter butzleri (strain RM4018) (Arcobacter butzleri).